Consider the following 138-residue polypeptide: Transcriptional regulator MraZ (138 aa).

SpoVT-AbrB domains follow at residues 3-45 and 74-117; these read EFQH…PLAE and ATEC…AAER.

This sequence belongs to the MraZ family. Forms oligomers.

The protein localises to the cytoplasm. It localises to the nucleoid. This is Transcriptional regulator MraZ from Symbiobacterium thermophilum (strain DSM 24528 / JCM 14929 / IAM 14863 / T).